A 224-amino-acid polypeptide reads, in one-letter code: Protein GrpE (224 aa).

The tract at residues 1 to 72 (MEKERDVAQE…KAKEEQNEEL (72 aa)) is disordered. The segment covering 10 to 19 (EQATYEQESP) has biased composition (polar residues). The segment covering 20–67 (NAERQEELKENEHQEKNAPEEQEKVREENGRQDAQKDEIGDPEKAKEE) has biased composition (basic and acidic residues).

It belongs to the GrpE family. As to quaternary structure, homodimer.

Its subcellular location is the cytoplasm. Participates actively in the response to hyperosmotic and heat shock by preventing the aggregation of stress-denatured proteins, in association with DnaK and GrpE. It is the nucleotide exchange factor for DnaK and may function as a thermosensor. Unfolded proteins bind initially to DnaJ; upon interaction with the DnaJ-bound protein, DnaK hydrolyzes its bound ATP, resulting in the formation of a stable complex. GrpE releases ADP from DnaK; ATP binding to DnaK triggers the release of the substrate protein, thus completing the reaction cycle. Several rounds of ATP-dependent interactions between DnaJ, DnaK and GrpE are required for fully efficient folding. This is Protein GrpE from Parageobacillus thermoglucosidasius (Geobacillus thermoglucosidasius).